A 288-amino-acid polypeptide reads, in one-letter code: Elongation factor Ts (288 aa).

Positions 82–85 (TDFV) are involved in Mg(2+) ion dislocation from EF-Tu.

This sequence belongs to the EF-Ts family.

It is found in the cytoplasm. Its function is as follows. Associates with the EF-Tu.GDP complex and induces the exchange of GDP to GTP. It remains bound to the aminoacyl-tRNA.EF-Tu.GTP complex up to the GTP hydrolysis stage on the ribosome. This chain is Elongation factor Ts, found in Chlorobium phaeovibrioides (strain DSM 265 / 1930) (Prosthecochloris vibrioformis (strain DSM 265)).